Reading from the N-terminus, the 203-residue chain is Glutathione S-transferase 2 (203 aa).

One can recognise a GST N-terminal domain in the interval 1–78 (MPKVVFHYFG…YLGRKYGLAG (78 aa)). Glutathione is bound by residues tyrosine 8, tryptophan 38, lysine 42, 48-50 (GQM), and 62-63 (QS). A GST C-terminal domain is found at 80-203 (DIEEDFEIDQ…YLDSAPKKEF (124 aa)).

This sequence belongs to the GST superfamily. Sigma family. Homodimer.

The catalysed reaction is RX + glutathione = an S-substituted glutathione + a halide anion + H(+). Functionally, conjugation of reduced glutathione to a wide number of exogenous and endogenous hydrophobic electrophiles. The polypeptide is Glutathione S-transferase 2 (GST2) (Manduca sexta (Tobacco hawkmoth)).